A 114-amino-acid chain; its full sequence is Large ribosomal subunit protein bL19 (114 aa).

It belongs to the bacterial ribosomal protein bL19 family.

Its function is as follows. This protein is located at the 30S-50S ribosomal subunit interface and may play a role in the structure and function of the aminoacyl-tRNA binding site. This Bacillus cereus (strain AH187) protein is Large ribosomal subunit protein bL19.